Consider the following 385-residue polypeptide: Spermidine/putrescine import ATP-binding protein PotA (385 aa).

Residues 6–238 (IEFKNVSKVF…PINHFVATFI (233 aa)) enclose the ABC transporter domain. 40–47 (GASGSGKS) serves as a coordination point for ATP.

The protein belongs to the ABC transporter superfamily. Spermidine/putrescine importer (TC 3.A.1.11.1) family. In terms of assembly, the complex is composed of two ATP-binding proteins (PotA), two transmembrane proteins (PotB and PotC) and a solute-binding protein (PotD).

Its subcellular location is the cell membrane. It catalyses the reaction ATP + H2O + polyamine-[polyamine-binding protein]Side 1 = ADP + phosphate + polyamineSide 2 + [polyamine-binding protein]Side 1.. Its function is as follows. Part of the ABC transporter complex PotABCD involved in spermidine/putrescine import. Responsible for energy coupling to the transport system. The chain is Spermidine/putrescine import ATP-binding protein PotA from Streptococcus pneumoniae serotype 4 (strain ATCC BAA-334 / TIGR4).